The sequence spans 589 residues: Phenylalanine--tRNA ligase beta subunit (589 aa).

The 78-residue stretch at 302-379 (LAYRKEMVRA…IAYGYSNIQM (78 aa)) folds into the B5 domain. Mg(2+) is bound by residues aspartate 357, aspartate 363, glutamate 366, and aspartate 367.

Belongs to the phenylalanyl-tRNA synthetase beta subunit family. Type 2 subfamily. As to quaternary structure, heterotetramer; dimer of two heterodimers formed by FARSA and FARSB. Mg(2+) is required as a cofactor.

The protein localises to the cytoplasm. The enzyme catalyses tRNA(Phe) + L-phenylalanine + ATP = L-phenylalanyl-tRNA(Phe) + AMP + diphosphate + H(+). The sequence is that of Phenylalanine--tRNA ligase beta subunit (FARSB) from Pongo abelii (Sumatran orangutan).